The primary structure comprises 447 residues: MIKIKKGLNLPIAGRPEQVIYDGPAITEVALLGEEYVGMRPSMKIKEGEAVKKGQVLFEDKKNPGVVFTAPASGKIAAIHRGEKRVLQSVVIAVEGNDEIEFERYVPEALAKLSSEEVRRNLIQSGLWTALRTRPFSKIPAVDAEPFAIFVNAMDTNPLAADPTVIIKEAAEDFKRGLLVLSRLTERKIHVCKAAGADVPSENAANIETHEFGGPHPAGLSGTHIHFIEPVGANKTVWTINYQDVIAIGRLFVTGRLNTERVVALGGLQVNKPRLLRTVLGAKVSQLTAGELVDADNRVISGSVLNGAIAQGAHDYLGRYHNQISVIEEGRGKELFGWVAPQPDKYSITRTTLGHFLKNKLFKFTTAVNGGDRAMVPIGTYERVMPLDILPTLLLRDLIVGDTDSAQALGCLELDEEDLALCSFVCPGKYEYGPLLRKVLETIEKEG.

This sequence belongs to the NqrA family. Composed of six subunits; NqrA, NqrB, NqrC, NqrD, NqrE and NqrF.

It carries out the reaction a ubiquinone + n Na(+)(in) + NADH + H(+) = a ubiquinol + n Na(+)(out) + NAD(+). In terms of biological role, NQR complex catalyzes the reduction of ubiquinone-1 to ubiquinol by two successive reactions, coupled with the transport of Na(+) ions from the cytoplasm to the periplasm. NqrA to NqrE are probably involved in the second step, the conversion of ubisemiquinone to ubiquinol. This chain is Na(+)-translocating NADH-quinone reductase subunit A, found in Neisseria gonorrhoeae (strain NCCP11945).